A 397-amino-acid chain; its full sequence is Ubiquitin-like modifier-activating enzyme 5 (397 aa).

ATP contacts are provided by G76, D97, K120, N143, and N177. Zn(2+)-binding residues include C219 and C222. The active-site Glycyl thioester intermediate is the C243. Residues C296 and C301 each coordinate Zn(2+). The interval 343–384 (PSDAPTDLSQSTDVGQGLRLAYEAPEKSSAEATQAATAPVDD) is disordered.

Belongs to the ubiquitin-activating E1 family. UBA5 subfamily.

In terms of biological role, E1-like enzyme which activates UFM1. This chain is Ubiquitin-like modifier-activating enzyme 5, found in Drosophila pseudoobscura pseudoobscura (Fruit fly).